Consider the following 243-residue polypeptide: Uridylate kinase (243 aa).

15 to 18 serves as a coordination point for ATP; it reads KLSG. The segment at 23–28 is involved in allosteric activation by GTP; the sequence is GEEGFG. Residue Gly57 participates in UMP binding. Residues Gly58 and Arg62 each contribute to the ATP site. Residues Asp77 and 138–145 each bind UMP; that span reads TGNPFFTT. Residues Thr165, Phe171, and Asp174 each coordinate ATP.

It belongs to the UMP kinase family. In terms of assembly, homohexamer.

Its subcellular location is the cytoplasm. It catalyses the reaction UMP + ATP = UDP + ADP. The protein operates within pyrimidine metabolism; CTP biosynthesis via de novo pathway; UDP from UMP (UMPK route): step 1/1. With respect to regulation, allosterically activated by GTP. Inhibited by UTP. In terms of biological role, catalyzes the reversible phosphorylation of UMP to UDP. This Aliivibrio fischeri (strain ATCC 700601 / ES114) (Vibrio fischeri) protein is Uridylate kinase.